The following is a 321-amino-acid chain: Tetraacyldisaccharide 4'-kinase (321 aa).

54-61 (SVGGTGKT) is an ATP binding site.

Belongs to the LpxK family.

It carries out the reaction a lipid A disaccharide + ATP = a lipid IVA + ADP + H(+). Its pathway is glycolipid biosynthesis; lipid IV(A) biosynthesis; lipid IV(A) from (3R)-3-hydroxytetradecanoyl-[acyl-carrier-protein] and UDP-N-acetyl-alpha-D-glucosamine: step 6/6. In terms of biological role, transfers the gamma-phosphate of ATP to the 4'-position of a tetraacyldisaccharide 1-phosphate intermediate (termed DS-1-P) to form tetraacyldisaccharide 1,4'-bis-phosphate (lipid IVA). The protein is Tetraacyldisaccharide 4'-kinase of Rickettsia typhi (strain ATCC VR-144 / Wilmington).